A 166-amino-acid chain; its full sequence is Large ribosomal subunit protein mL41 (166 aa).

Residues 1–26 (MQNCIKLVPLALKCPQRAISTSAVLD) constitute a mitochondrion transit peptide.

This sequence belongs to the mitochondrion-specific ribosomal protein mL41 family. In terms of assembly, component of the mitochondrial ribosome large subunit (39S) which comprises a 16S rRNA and about 50 distinct proteins.

The protein localises to the mitochondrion. This is Large ribosomal subunit protein mL41 (mRpL41) from Drosophila pseudoobscura pseudoobscura (Fruit fly).